Here is a 190-residue protein sequence, read N- to C-terminus: HTH-type transcriptional repressor AcnR (190 aa).

In terms of domain architecture, HTH tetR-type spans 10–70 (SMRRQEILEG…ALAREDAARM (61 aa)). Residues 33–52 (TVRRLEETVGKSRGAIFHHF) constitute a DNA-binding region (H-T-H motif). Residues 79 to 80 (LV), arginine 130, and asparagine 134 each bind citrate. Glutamate 181 contacts Mg(2+). Arginine 185 contributes to the citrate binding site.

As to quaternary structure, homodimer.

AcnR negatively controls the expression of the aconitase gene acn. In Corynebacterium diphtheriae (strain ATCC 700971 / NCTC 13129 / Biotype gravis), this protein is HTH-type transcriptional repressor AcnR.